An 80-amino-acid chain; its full sequence is uncharacterized protein (80 aa).

Residues 57 to 80 (GNIDSDVSDQDQIGNPSAPISNQI) are disordered.

This is an uncharacterized protein from Bacillus subtilis (strain 168).